The chain runs to 267 residues: 4-hydroxy-tetrahydrodipicolinate reductase (267 aa).

8–13 lines the NAD(+) pocket; sequence GAAGRM. Arg35 serves as a coordination point for NADP(+). NAD(+) is bound by residues 98–100 and 122–125; these read GTT and AANF. His155 acts as the Proton donor/acceptor in catalysis. Residue His156 participates in (S)-2,3,4,5-tetrahydrodipicolinate binding. The Proton donor role is filled by Lys159. 165–166 lines the (S)-2,3,4,5-tetrahydrodipicolinate pocket; that stretch reads GT.

The protein belongs to the DapB family.

It is found in the cytoplasm. It catalyses the reaction (S)-2,3,4,5-tetrahydrodipicolinate + NAD(+) + H2O = (2S,4S)-4-hydroxy-2,3,4,5-tetrahydrodipicolinate + NADH + H(+). The enzyme catalyses (S)-2,3,4,5-tetrahydrodipicolinate + NADP(+) + H2O = (2S,4S)-4-hydroxy-2,3,4,5-tetrahydrodipicolinate + NADPH + H(+). It participates in amino-acid biosynthesis; L-lysine biosynthesis via DAP pathway; (S)-tetrahydrodipicolinate from L-aspartate: step 4/4. Functionally, catalyzes the conversion of 4-hydroxy-tetrahydrodipicolinate (HTPA) to tetrahydrodipicolinate. This chain is 4-hydroxy-tetrahydrodipicolinate reductase, found in Azotobacter vinelandii (strain DJ / ATCC BAA-1303).